The primary structure comprises 194 residues: Ferredoxin, apicoplast (194 aa).

Residues 1–19 constitute an apicoplast transit peptide; sequence MNIVILLLILTFSIKHSNT. One can recognise a 2Fe-2S ferredoxin-type domain in the interval 99–189; that stretch reads YNITLRTNDG…DCVIETHKED (91 aa). Residues C135, C140, C143, and C173 each contribute to the [2Fe-2S] cluster site.

The protein belongs to the 2Fe2S plant-type ferredoxin family. Requires [2Fe-2S] cluster as cofactor.

Its subcellular location is the plastid. The protein localises to the apicoplast. In terms of biological role, ferredoxins are iron-sulfur proteins that transfer electrons in a wide variety of metabolic reactions. By transferring electrons to 4-hydroxy-3-methylbut-2-enyl diphosphate reductase LytB/IspH, plays a role in the terminal step of the DOXP/MEP pathway for isoprenoid precursor biosynthesis. In Plasmodium falciparum (isolate 3D7), this protein is Ferredoxin, apicoplast.